The sequence spans 347 residues: Phenylalanine--tRNA ligase alpha subunit (347 aa).

E265 provides a ligand contact to Mg(2+).

Belongs to the class-II aminoacyl-tRNA synthetase family. Phe-tRNA synthetase alpha subunit type 1 subfamily. Tetramer of two alpha and two beta subunits. Requires Mg(2+) as cofactor.

The protein localises to the cytoplasm. The catalysed reaction is tRNA(Phe) + L-phenylalanine + ATP = L-phenylalanyl-tRNA(Phe) + AMP + diphosphate + H(+). This Wolbachia pipientis wMel protein is Phenylalanine--tRNA ligase alpha subunit.